The following is a 484-amino-acid chain: UDP-N-acetylmuramate--L-alanine ligase (484 aa).

122 to 128 (GTHGKTT) is an ATP binding site.

It belongs to the MurCDEF family.

Its subcellular location is the cytoplasm. The enzyme catalyses UDP-N-acetyl-alpha-D-muramate + L-alanine + ATP = UDP-N-acetyl-alpha-D-muramoyl-L-alanine + ADP + phosphate + H(+). The protein operates within cell wall biogenesis; peptidoglycan biosynthesis. In terms of biological role, cell wall formation. The chain is UDP-N-acetylmuramate--L-alanine ligase from Mycobacterium sp. (strain JLS).